A 104-amino-acid polypeptide reads, in one-letter code: Flagellar hook-basal body complex protein FliE (104 aa).

It belongs to the FliE family.

It localises to the bacterial flagellum basal body. The polypeptide is Flagellar hook-basal body complex protein FliE (Edwardsiella ictaluri (strain 93-146)).